Here is a 428-residue protein sequence, read N- to C-terminus: Glutamate-1-semialdehyde 2,1-aminomutase (428 aa).

Lys-267 bears the N6-(pyridoxal phosphate)lysine mark.

The protein belongs to the class-III pyridoxal-phosphate-dependent aminotransferase family. HemL subfamily. In terms of assembly, homodimer. It depends on pyridoxal 5'-phosphate as a cofactor.

It localises to the cytoplasm. The catalysed reaction is (S)-4-amino-5-oxopentanoate = 5-aminolevulinate. Its pathway is porphyrin-containing compound metabolism; protoporphyrin-IX biosynthesis; 5-aminolevulinate from L-glutamyl-tRNA(Glu): step 2/2. It functions in the pathway porphyrin-containing compound metabolism; chlorophyll biosynthesis. This is Glutamate-1-semialdehyde 2,1-aminomutase from Prochlorococcus marinus (strain MIT 9313).